The sequence spans 127 residues: UPF0325 protein VS_2356 (127 aa).

It belongs to the UPF0325 family.

This is UPF0325 protein VS_2356 from Vibrio atlanticus (strain LGP32) (Vibrio splendidus (strain Mel32)).